Reading from the N-terminus, the 513-residue chain is Xyloglucan 6-xylosyltransferase 4 (513 aa).

At 1–39 the chain is on the cytoplasmic side; the sequence is MFQDGSRSSGSGRGLSTTAVSNGGWRTRGFLRGWQIQNT. Residues 40–60 traverse the membrane as a helical; Signal-anchor for type II membrane protein segment; it reads LFNNIKFMILCCFVTILILLG. Residues 61 to 513 are Lumenal-facing; the sequence is TIRVGNLGSS…IRRMHMETKP (453 aa). 5 N-linked (GlcNAc...) asparagine glycosylation sites follow: Asn76, Asn110, Asn142, Asn174, and Asn490.

Belongs to the glycosyltransferase 34 family.

Its subcellular location is the golgi apparatus membrane. It carries out the reaction Transfers an alpha-D-xylosyl residue from UDP-D-xylose to a glucose residue in xyloglucan, forming an alpha-(1-&gt;6)-D-xylosyl-D-glucose linkage.. Xylosyltransferase specific to UDP-D-xylose that accepts cellohexaose as substrate to produce xyloglucan. The polypeptide is Xyloglucan 6-xylosyltransferase 4 (Arabidopsis thaliana (Mouse-ear cress)).